The primary structure comprises 127 residues: RxLR effector protein CRE6 (127 aa).

The N-terminal stretch at 1–19 (MIRNALLVLVFVLIGTISA) is a signal peptide. Residues 48–67 (RLLRQGSVKEGGVHDATEER) carry the RxLR-dEER motif.

Belongs to the RxLR effector family.

It is found in the secreted. The protein localises to the host cell. Effector that is involved in host plant infection. Contributes to virulence during the early infection stage, by inhibiting plant defense responses induced by both PAMP-triggered immunity (PTI) and effector-triggered immunity (ETI). This is RxLR effector protein CRE6 from Phytophthora infestans (strain T30-4) (Potato late blight agent).